The following is an 89-amino-acid chain: Small ribosomal subunit protein bS20 (89 aa).

Residues Met-1–Ser-26 form a disordered region. The segment covering Lys-16–Ser-26 has biased composition (basic residues).

Belongs to the bacterial ribosomal protein bS20 family.

Binds directly to 16S ribosomal RNA. The sequence is that of Small ribosomal subunit protein bS20 from Buchnera aphidicola subsp. Acyrthosiphon pisum (strain 5A).